Consider the following 62-residue polypeptide: Defensin BmKDfsin5 (62 aa).

The signal sequence occupies residues 1–24 (MKVIALFFLFAFIFCTLEVAIVEA). Disulfide bonds link cysteine 28–cysteine 49, cysteine 35–cysteine 57, and cysteine 39–cysteine 59.

Belongs to the invertebrate defensin family. Type 2 subfamily. As to expression, highly expressed in non-venom gland (hemolymph) and moderately expressed in venom gland.

It is found in the secreted. Antibacterial peptide active against Gram-positive bacteria (including S.aureus ATCC25923 (MIC=2.5 uM), M.luteus AB93113 (MIC=2.5 uM), and the antibiotic-resistant S.epidermidis PRSE P1389 (MIC=1.25 uM)), but not against Gram-negative bacteria (including E.coli and P.aeruginosa). Also has weak blocking activity on Kv1.1/KCNA1 (8.7% inhibition), Kv1.2/KCNA2 (10.2% inhibition), Kv1.3/KCNA3 (9.0% inhibition), KCa3.1/KCNN4/IK (9.1% inhibition), KCa2.3/KCNN3/SK3 (46.3% inhibition) and Kv11.1/KCNH2/ERG1 (16.9% inhibition) channels (tested at 1 uM). It inhibits potassium channel current by interacting with the pore region. The sequence is that of Defensin BmKDfsin5 from Olivierus martensii (Manchurian scorpion).